Consider the following 310-residue polypeptide: Ribosomal RNA small subunit methyltransferase H (310 aa).

S-adenosyl-L-methionine-binding positions include 32–34 (GGH), Asp52, Phe79, Asp100, and Gln107.

It belongs to the methyltransferase superfamily. RsmH family.

The protein resides in the cytoplasm. It catalyses the reaction cytidine(1402) in 16S rRNA + S-adenosyl-L-methionine = N(4)-methylcytidine(1402) in 16S rRNA + S-adenosyl-L-homocysteine + H(+). Functionally, specifically methylates the N4 position of cytidine in position 1402 (C1402) of 16S rRNA. This is Ribosomal RNA small subunit methyltransferase H from Geobacillus kaustophilus (strain HTA426).